A 193-amino-acid chain; its full sequence is dCTP deaminase (193 aa).

DCTP is bound by residues 110-115 (RSSLAR), Asp-128, 136-138 (VLE), Tyr-171, Lys-178, and Gln-182. Residue Glu-138 is the Proton donor/acceptor of the active site. The disordered stretch occupies residues 168-193 (DRPYNRRQDAKYKNQQGAVSSRIDED). Over residues 170-179 (PYNRRQDAKY) the composition is skewed to basic and acidic residues.

Belongs to the dCTP deaminase family. As to quaternary structure, homotrimer.

It catalyses the reaction dCTP + H2O + H(+) = dUTP + NH4(+). Its pathway is pyrimidine metabolism; dUMP biosynthesis; dUMP from dCTP (dUTP route): step 1/2. In terms of biological role, catalyzes the deamination of dCTP to dUTP. The protein is dCTP deaminase of Photorhabdus laumondii subsp. laumondii (strain DSM 15139 / CIP 105565 / TT01) (Photorhabdus luminescens subsp. laumondii).